We begin with the raw amino-acid sequence, 245 residues long: Probable phosphatase PMI1003 (245 aa).

The Zn(2+) site is built by His7, His9, His15, His40, Glu73, His101, His131, Asp192, and His194.

The protein belongs to the PHP family. In terms of assembly, homotrimer. Zn(2+) serves as cofactor.

In Proteus mirabilis (strain HI4320), this protein is Probable phosphatase PMI1003.